A 119-amino-acid polypeptide reads, in one-letter code: Ribonuclease P protein component (119 aa).

It belongs to the RnpA family. In terms of assembly, consists of a catalytic RNA component (M1 or rnpB) and a protein subunit.

It catalyses the reaction Endonucleolytic cleavage of RNA, removing 5'-extranucleotides from tRNA precursor.. Functionally, RNaseP catalyzes the removal of the 5'-leader sequence from pre-tRNA to produce the mature 5'-terminus. It can also cleave other RNA substrates such as 4.5S RNA. The protein component plays an auxiliary but essential role in vivo by binding to the 5'-leader sequence and broadening the substrate specificity of the ribozyme. The sequence is that of Ribonuclease P protein component from Aeromonas salmonicida (strain A449).